A 631-amino-acid polypeptide reads, in one-letter code: Phosphomethylpyrimidine synthase (631 aa).

Residues N239, M268, Y297, H333, 353–355, 394–397, and E433 each bind substrate; these read SRG and DGLR. H437 serves as a coordination point for Zn(2+). Residue Y460 coordinates substrate. A Zn(2+)-binding site is contributed by H501. [4Fe-4S] cluster contacts are provided by C581, C584, and C589.

The protein belongs to the ThiC family. In terms of assembly, homodimer. The cofactor is [4Fe-4S] cluster.

It catalyses the reaction 5-amino-1-(5-phospho-beta-D-ribosyl)imidazole + S-adenosyl-L-methionine = 4-amino-2-methyl-5-(phosphooxymethyl)pyrimidine + CO + 5'-deoxyadenosine + formate + L-methionine + 3 H(+). It functions in the pathway cofactor biosynthesis; thiamine diphosphate biosynthesis. In terms of biological role, catalyzes the synthesis of the hydroxymethylpyrimidine phosphate (HMP-P) moiety of thiamine from aminoimidazole ribotide (AIR) in a radical S-adenosyl-L-methionine (SAM)-dependent reaction. The protein is Phosphomethylpyrimidine synthase of Escherichia coli O157:H7.